The primary structure comprises 101 residues: Signal recognition particle 19 kDa protein (101 aa).

This sequence belongs to the SRP19 family. In terms of assembly, part of the signal recognition particle protein translocation system, which is composed of SRP and FtsY. Archaeal SRP consists of a 7S RNA molecule of 300 nucleotides and two protein subunits: SRP54 and SRP19.

It is found in the cytoplasm. In terms of biological role, involved in targeting and insertion of nascent membrane proteins into the cytoplasmic membrane. Binds directly to 7S RNA and mediates binding of the 54 kDa subunit of the SRP. In Methanosarcina mazei (strain ATCC BAA-159 / DSM 3647 / Goe1 / Go1 / JCM 11833 / OCM 88) (Methanosarcina frisia), this protein is Signal recognition particle 19 kDa protein.